Here is a 213-residue protein sequence, read N- to C-terminus: Cell wall protein PGA62 (213 aa).

A signal peptide spans 1–18 (MQFSSAVVLSAVAGSALA). N-linked (GlcNAc...) asparagine glycosylation occurs at Asn22. The interval 120–194 (CPLPSTEAPG…APAVSTAEAG (75 aa)) is disordered. A compositionally biased stretch (polar residues) spans 145 to 172 (PVPTTAAESSPAKTTAAESSPAQETTPK). The span at 173–194 (TVAAESSSAETTAPAVSTAEAG) shows a compositional bias: low complexity. Gly194 carries the GPI-anchor amidated glycine lipid modification. The propeptide at 195-213 (AAANAVPVAAGLLALAALF) is removed in mature form.

This sequence belongs to the HWP1 family. In terms of processing, N- and O-glycosylated. The GPI-anchor is attached to the protein in the endoplasmic reticulum and serves to target the protein to the cell surface. There, the glucosamine-inositol phospholipid moiety is cleaved off and the GPI-modified mannoprotein is covalently attached via its lipidless GPI glycan remnant to the 1,6-beta-glucan of the outer cell wall layer.

It is found in the secreted. The protein resides in the cell wall. It localises to the membrane. Functionally, cell wall protein necessary for cell wall integrity. Plays only a minor role in hyphal morphogenesis and is not critical to biofilm formation. In Candida albicans (strain SC5314 / ATCC MYA-2876) (Yeast), this protein is Cell wall protein PGA62 (PGA62).